The sequence spans 147 residues: Large ribosomal subunit protein uL15 (147 aa).

The segment at 1 to 62 is disordered; that stretch reads MDLNTLKPAL…GQMPLQRRLP (62 aa). Residues 30 to 39 are compositionally biased toward basic residues; it reads TATKGHKGQK.

This sequence belongs to the universal ribosomal protein uL15 family. Part of the 50S ribosomal subunit.

In terms of biological role, binds to the 23S rRNA. The polypeptide is Large ribosomal subunit protein uL15 (Pelobacter propionicus (strain DSM 2379 / NBRC 103807 / OttBd1)).